The sequence spans 279 residues: DegV domain-containing protein SACOL1460 (279 aa).

Residues Gln4–Lys278 enclose the DegV domain. The hexadecanoate site is built by Thr61 and Ser93.

In terms of biological role, may bind long-chain fatty acids, such as palmitate, and may play a role in lipid transport or fatty acid metabolism. This chain is DegV domain-containing protein SACOL1460, found in Staphylococcus aureus (strain COL).